A 418-amino-acid polypeptide reads, in one-letter code: Serine hydroxymethyltransferase (418 aa).

(6S)-5,6,7,8-tetrahydrofolate is bound by residues Leu-121 and 125-127 (GHL). An N6-(pyridoxal phosphate)lysine modification is found at Lys-230. Residues Glu-246 and 355–357 (SPF) each bind (6S)-5,6,7,8-tetrahydrofolate.

This sequence belongs to the SHMT family. Homodimer. Requires pyridoxal 5'-phosphate as cofactor.

It is found in the cytoplasm. The catalysed reaction is (6R)-5,10-methylene-5,6,7,8-tetrahydrofolate + glycine + H2O = (6S)-5,6,7,8-tetrahydrofolate + L-serine. Its pathway is one-carbon metabolism; tetrahydrofolate interconversion. It functions in the pathway amino-acid biosynthesis; glycine biosynthesis; glycine from L-serine: step 1/1. Its function is as follows. Catalyzes the reversible interconversion of serine and glycine with tetrahydrofolate (THF) serving as the one-carbon carrier. This reaction serves as the major source of one-carbon groups required for the biosynthesis of purines, thymidylate, methionine, and other important biomolecules. Also exhibits THF-independent aldolase activity toward beta-hydroxyamino acids, producing glycine and aldehydes, via a retro-aldol mechanism. This is Serine hydroxymethyltransferase from Streptococcus pneumoniae (strain Hungary19A-6).